We begin with the raw amino-acid sequence, 66 residues long: Conotoxin Lt3.5 (66 aa).

Residues 1–20 (MMSKLGALLTICLLLFPLTA) form the signal peptide. A propeptide spanning residues 21–53 (VPLDGDQPLDRHAERMHDGISPKRHPWFDPVKR) is cleaved from the precursor. Intrachain disulfides connect C54–C66, C55–C62, and C59–C65. A 4-hydroxyproline modification is found at P64.

Belongs to the conotoxin M superfamily. Expressed by the venom duct.

It localises to the secreted. This Conus litteratus (Lettered cone) protein is Conotoxin Lt3.5.